We begin with the raw amino-acid sequence, 219 residues long: MSIQVFCDFDGTITNNDNIMSIMEKFAPPEAEEVKNRILSQELSIQEGVSQLFQLIPTNLHDEIIQFLIETAEIRNGFHEFIQFVNENNISFYVISGGMDFFVYPLLQGLIPKEQIYCNETDFSNEYITVNWPHPCDRHCQNHCGLCKSSLIRKLGDTNDFHIVIGDSITDLQAAKQADKVFARDFLITKCEENHISYTPFETFHDVQTELKHLLEVKL.

The protein belongs to the HAD-like hydrolase superfamily. MtnX family.

It catalyses the reaction 2-hydroxy-5-methylsulfanyl-3-oxopent-1-enyl phosphate + H2O = 1,2-dihydroxy-5-(methylsulfanyl)pent-1-en-3-one + phosphate. It functions in the pathway amino-acid biosynthesis; L-methionine biosynthesis via salvage pathway; L-methionine from S-methyl-5-thio-alpha-D-ribose 1-phosphate: step 4/6. In terms of biological role, dephosphorylates 2-hydroxy-3-keto-5-methylthiopentenyl-1-phosphate (HK-MTPenyl-1-P) yielding 1,2-dihydroxy-3-keto-5-methylthiopentene (DHK-MTPene). The polypeptide is 2-hydroxy-3-keto-5-methylthiopentenyl-1-phosphate phosphatase (Bacillus thuringiensis subsp. konkukian (strain 97-27)).